Here is a 338-residue protein sequence, read N- to C-terminus: Phenylalanine--tRNA ligase alpha subunit (338 aa).

A Mg(2+)-binding site is contributed by Glu-253.

It belongs to the class-II aminoacyl-tRNA synthetase family. Phe-tRNA synthetase alpha subunit type 1 subfamily. As to quaternary structure, tetramer of two alpha and two beta subunits. It depends on Mg(2+) as a cofactor.

It localises to the cytoplasm. The catalysed reaction is tRNA(Phe) + L-phenylalanine + ATP = L-phenylalanyl-tRNA(Phe) + AMP + diphosphate + H(+). This is Phenylalanine--tRNA ligase alpha subunit from Syntrophotalea carbinolica (strain DSM 2380 / NBRC 103641 / GraBd1) (Pelobacter carbinolicus).